A 194-amino-acid chain; its full sequence is Peptidyl-tRNA hydrolase (194 aa).

Y17 is a tRNA binding site. The active-site Proton acceptor is the H22. 3 residues coordinate tRNA: Y68, N70, and N116.

The protein belongs to the PTH family. In terms of assembly, monomer.

It localises to the cytoplasm. It carries out the reaction an N-acyl-L-alpha-aminoacyl-tRNA + H2O = an N-acyl-L-amino acid + a tRNA + H(+). Its function is as follows. Hydrolyzes ribosome-free peptidyl-tRNAs (with 1 or more amino acids incorporated), which drop off the ribosome during protein synthesis, or as a result of ribosome stalling. In terms of biological role, catalyzes the release of premature peptidyl moieties from peptidyl-tRNA molecules trapped in stalled 50S ribosomal subunits, and thus maintains levels of free tRNAs and 50S ribosomes. The protein is Peptidyl-tRNA hydrolase of Pseudomonas savastanoi pv. phaseolicola (strain 1448A / Race 6) (Pseudomonas syringae pv. phaseolicola (strain 1448A / Race 6)).